We begin with the raw amino-acid sequence, 236 residues long: Transcriptional regulatory protein RprY (236 aa).

The Response regulatory domain occupies 9 to 123; sequence RILLCEDDEN…ELTFRIEAIL (115 aa). At D58 the chain carries 4-aspartylphosphate. The segment at residues 134 to 231 is a DNA-binding region (ompR/PhoB-type); the sequence is SNVYKIGKFT…IHGKGYKLIT (98 aa).

In terms of processing, phosphorylated by RprX.

The protein resides in the cytoplasm. Functionally, member of the two-component regulatory system RprX/RprY. In Bacteroides fragilis (strain YCH46), this protein is Transcriptional regulatory protein RprY (rprY).